Reading from the N-terminus, the 252-residue chain is Probable 6-phosphogluconolactonase 5 (252 aa).

Belongs to the glucosamine/galactosamine-6-phosphate isomerase family. 6-phosphogluconolactonase subfamily.

It localises to the cytoplasm. It is found in the cytosol. It catalyses the reaction 6-phospho-D-glucono-1,5-lactone + H2O = 6-phospho-D-gluconate + H(+). It functions in the pathway carbohydrate degradation; pentose phosphate pathway; D-ribulose 5-phosphate from D-glucose 6-phosphate (oxidative stage): step 2/3. In terms of biological role, catalyzes the hydrolysis of 6-phosphogluconolactone to 6-phosphogluconate. This chain is Probable 6-phosphogluconolactonase 5, found in Arabidopsis thaliana (Mouse-ear cress).